Here is a 492-residue protein sequence, read N- to C-terminus: Argininosuccinate lyase (492 aa).

Belongs to the lyase 1 family. Argininosuccinate lyase subfamily.

The protein resides in the cytoplasm. The catalysed reaction is 2-(N(omega)-L-arginino)succinate = fumarate + L-arginine. Its pathway is amino-acid biosynthesis; L-arginine biosynthesis; L-arginine from L-ornithine and carbamoyl phosphate: step 3/3. This is Argininosuccinate lyase from Methanoculleus marisnigri (strain ATCC 35101 / DSM 1498 / JR1).